We begin with the raw amino-acid sequence, 214 residues long: MHTVQKDTTFTKIFVGGLPYHTTDASLRKYFEVFGDIDEAVVITDRQTAKSRGYGFVTMSDRAAAERACKDPNPIIDGRKANVNLAYLGAKPRNLQSAFTIGVQQLHPAFIQRPFGLTPQYIYPPTIVQPSMVIPTPIPSLQSPYIDYNAATQAYTHYTTAAYEQYPYAASPATGYMGYGYTSPVQQPLSTTTGAPPTAYIQYQPQQLQPDRMQ.

The RRM domain maps to 11–88; it reads TKIFVGGLPY…RKANVNLAYL (78 aa).

This sequence belongs to the RBM38 family. In terms of tissue distribution, strongly expressed in the nervous system. Expressed at early neurula stages of development.

It localises to the cytoplasm. The protein resides in the cytosol. The protein localises to the nucleus. In terms of biological role, RNA-binding protein that specifically bind the 3'-UTR of VegT transcripts, leading to maintain their stability and stimulate their translation, thereby playing a role in germ layer formation. VegT is a localized maternal determinant essentially required for endoderm formation. Also has some proneural function in the open neural plate and in the context of retinogenesis. May also act as a mRNA splicing factor. May play a role in myogenic differentiation. In Xenopus laevis (African clawed frog), this protein is RNA-binding protein 38 (rbm38).